We begin with the raw amino-acid sequence, 881 residues long: Translation initiation factor IF-2 (881 aa).

2 disordered regions span residues 31-147 (KLAQ…TKVP) and 165-291 (SVVG…HYDE). Basic and acidic residues predominate over residues 42–55 (NSSEKPSAKVAEKV). The span at 68 to 77 (ATPESVSSET) shows a compositional bias: polar residues. Over residues 114–128 (VEEEIASSTDSEPEV) the composition is skewed to acidic residues. Positions 191–203 (PKKEDKPAPKERS) are enriched in basic and acidic residues. The span at 204 to 233 (GQAQAKPQQSSEASSENKPHSPNNNRSSQP) shows a compositional bias: polar residues. The segment covering 235–267 (YRRDTSKKPGSDFRDRAKKDDNPKAFTGRDRYG) has biased composition (basic and acidic residues). Residues 278 to 287 (RKKRVQKTKK) are compositionally biased toward basic residues. A tr-type G domain is found at 387-556 (IRPPIVAFMG…ALQAEVLELK (170 aa)). Residues 396–403 (GHVDHGKT) are G1. 396 to 403 (GHVDHGKT) contributes to the GTP binding site. The segment at 421–425 (AITQH) is G2. Residues 442–445 (DTPG) form a G3 region. Residues 442-446 (DTPGH) and 496-499 (NKCD) contribute to the GTP site. A G4 region spans residues 496-499 (NKCD). Residues 532 to 534 (SAK) form a G5 region.

It belongs to the TRAFAC class translation factor GTPase superfamily. Classic translation factor GTPase family. IF-2 subfamily.

It localises to the cytoplasm. Functionally, one of the essential components for the initiation of protein synthesis. Protects formylmethionyl-tRNA from spontaneous hydrolysis and promotes its binding to the 30S ribosomal subunits. Also involved in the hydrolysis of GTP during the formation of the 70S ribosomal complex. The sequence is that of Translation initiation factor IF-2 from Chlamydia felis (strain Fe/C-56) (Chlamydophila felis).